A 123-amino-acid polypeptide reads, in one-letter code: Protein Wnt-3b (123 aa).

Residue Ser1 is the site of O-palmitoleoyl serine; by PORCN attachment. A disulfide bridge links Cys89 with Cys104. N-linked (GlcNAc...) asparagine glycosylation is present at Asn90.

The protein belongs to the Wnt family. Palmitoleoylation is required for efficient binding to frizzled receptors. Depalmitoleoylation leads to Wnt signaling pathway inhibition.

The protein localises to the secreted. The protein resides in the extracellular space. It localises to the extracellular matrix. Ligand for members of the frizzled family of seven transmembrane receptors. Probable developmental protein. May be a signaling molecule which affects the development of discrete regions of tissues. Is likely to signal over only few cell diameters. This is Protein Wnt-3b (WNT-3B) from Plethodon jordani (Red-cheeked salamander).